The primary structure comprises 862 residues: Aldehyde-alcohol dehydrogenase (862 aa).

Residue C244 is part of the active site. 420–425 (GFWGGN) contributes to the NAD(+) binding site.

This sequence in the N-terminal section; belongs to the aldehyde dehydrogenase family. In the C-terminal section; belongs to the iron-containing alcohol dehydrogenase family.

The enzyme catalyses a primary alcohol + NAD(+) = an aldehyde + NADH + H(+). It catalyses the reaction a secondary alcohol + NAD(+) = a ketone + NADH + H(+). It carries out the reaction an aldehyde + NAD(+) + H2O = a carboxylate + NADH + 2 H(+). Functionally, has both aldehyde and alcohol dehydrogenase activities. Can use acetaldehyde, butyraldehyde, butanol and ethanol. This Clostridium acetobutylicum (strain ATCC 824 / DSM 792 / JCM 1419 / IAM 19013 / LMG 5710 / NBRC 13948 / NRRL B-527 / VKM B-1787 / 2291 / W) protein is Aldehyde-alcohol dehydrogenase.